The following is a 258-amino-acid chain: 2-succinyl-6-hydroxy-2,4-cyclohexadiene-1-carboxylate synthase (258 aa).

It belongs to the AB hydrolase superfamily. MenH family. As to quaternary structure, monomer.

It carries out the reaction 5-enolpyruvoyl-6-hydroxy-2-succinyl-cyclohex-3-ene-1-carboxylate = (1R,6R)-6-hydroxy-2-succinyl-cyclohexa-2,4-diene-1-carboxylate + pyruvate. The protein operates within quinol/quinone metabolism; 1,4-dihydroxy-2-naphthoate biosynthesis; 1,4-dihydroxy-2-naphthoate from chorismate: step 3/7. It functions in the pathway quinol/quinone metabolism; menaquinone biosynthesis. Functionally, catalyzes a proton abstraction reaction that results in 2,5-elimination of pyruvate from 2-succinyl-5-enolpyruvyl-6-hydroxy-3-cyclohexene-1-carboxylate (SEPHCHC) and the formation of 2-succinyl-6-hydroxy-2,4-cyclohexadiene-1-carboxylate (SHCHC). This is 2-succinyl-6-hydroxy-2,4-cyclohexadiene-1-carboxylate synthase from Enterobacter sp. (strain 638).